Reading from the N-terminus, the 121-residue chain is Large ribosomal subunit protein uL18 (121 aa).

It belongs to the universal ribosomal protein uL18 family. As to quaternary structure, part of the 50S ribosomal subunit; part of the 5S rRNA/L5/L18/L25 subcomplex. Contacts the 5S and 23S rRNAs.

In terms of biological role, this is one of the proteins that bind and probably mediate the attachment of the 5S RNA into the large ribosomal subunit, where it forms part of the central protuberance. The protein is Large ribosomal subunit protein uL18 of Anaplasma phagocytophilum (strain HZ).